Consider the following 212-residue polypeptide: Adenylate kinase (212 aa).

10 to 15 contacts ATP; that stretch reads GAGKGT. The tract at residues 30–59 is NMP; the sequence is STGDMFRAAIANQTEMGVLAKSYIDKGELV. AMP is bound by residues Thr31, Arg36, 57–59, 86–89, and Gln93; these read ELV and GYPR. Positions 127 to 159 are LID; it reads GRIIHRETGETFHKVFNPPADYKEEDYYQREDD. ATP-binding positions include Arg128 and 137-138; that span reads TF. Residues Arg156 and Arg167 each coordinate AMP. Gln195 lines the ATP pocket.

The protein belongs to the adenylate kinase family. Monomer.

Its subcellular location is the cytoplasm. The catalysed reaction is AMP + ATP = 2 ADP. Its pathway is purine metabolism; AMP biosynthesis via salvage pathway; AMP from ADP: step 1/1. Functionally, catalyzes the reversible transfer of the terminal phosphate group between ATP and AMP. Plays an important role in cellular energy homeostasis and in adenine nucleotide metabolism. This Streptococcus sanguinis (strain SK36) protein is Adenylate kinase.